Reading from the N-terminus, the 574-residue chain is Zinc finger protein 394 (574 aa).

Residue serine 12 is modified to Phosphoserine. Lysine 40 is covalently cross-linked (Glycyl lysine isopeptide (Lys-Gly) (interchain with G-Cter in SUMO2)). Positions 64–146 (RLHFRQLRYQ…AVVRALQRAL (83 aa)) constitute an SCAN box domain. Residues 155-230 (VTFEDMAVSL…LQEAFQGKHP (76 aa)) enclose the KRAB domain. Residues 182–202 (ESAQKDSGSTVPPSLESRVEN) form a disordered region. Glycyl lysine isopeptide (Lys-Gly) (interchain with G-Cter in SUMO2) cross-links involve residues lysine 203, lysine 228, and lysine 254. Positions 231–284 (LFSKCGSTHEDRVEKQSGNPLPLKLENSAEAEGLNSISDVNKNGSIEGEDSKNN) are disordered. Over residues 265-274 (NSISDVNKNG) the composition is skewed to polar residues. A Glycyl lysine isopeptide (Lys-Gly) (interchain with G-Cter in SUMO2) cross-link involves residue lysine 282. C2H2-type zinc fingers lie at residues 358–380 (YKCGNCGKSFKQRSDLFRHQRIH), 386–408 (YGCQECGKSFSQSAALTKHQRTH), 414–436 (YTCLKCGERFRQNSHLNRHQSTH), 442–463 (FKCEECGETCRISNLFRHQRLH), 469–491 (YKCEECKKSFKQRSDLFKHHRIH), 497–519 (YGCSVCGKRFNQSATLIKHQRIH), and 525–547 (YKCLECGERFRQSTHLIRHQRIH). Lysine 443 participates in a covalent cross-link: Glycyl lysine isopeptide (Lys-Gly) (interchain with G-Cter in SUMO2).

It belongs to the krueppel C2H2-type zinc-finger protein family.

Its subcellular location is the nucleus. In terms of biological role, may be involved in transcriptional regulation. This chain is Zinc finger protein 394 (ZNF394), found in Pongo abelii (Sumatran orangutan).